The primary structure comprises 313 residues: Foldase protein PrsA (313 aa).

A signal peptide spans 1-20 (MKKKLLAGAITLLSVATLAA). Cys-21 is lipidated: N-palmitoyl cysteine. Residue Cys-21 is the site of S-diacylglycerol cysteine attachment. The 99-residue stretch at 143 to 241 (TPDVTAQIIR…SQYYIVKLTK (99 aa)) folds into the PpiC domain.

It belongs to the PrsA family.

It localises to the cell membrane. The catalysed reaction is [protein]-peptidylproline (omega=180) = [protein]-peptidylproline (omega=0). In terms of biological role, plays a major role in protein secretion by helping the post-translocational extracellular folding of several secreted proteins. The protein is Foldase protein PrsA of Streptococcus pneumoniae (strain ATCC BAA-255 / R6).